The sequence spans 267 residues: tRNA pseudouridine synthase A (267 aa).

The active-site Nucleophile is aspartate 52. Tyrosine 110 is a substrate binding site.

The protein belongs to the tRNA pseudouridine synthase TruA family. Homodimer.

The enzyme catalyses uridine(38/39/40) in tRNA = pseudouridine(38/39/40) in tRNA. Formation of pseudouridine at positions 38, 39 and 40 in the anticodon stem and loop of transfer RNAs. This Paraburkholderia phymatum (strain DSM 17167 / CIP 108236 / LMG 21445 / STM815) (Burkholderia phymatum) protein is tRNA pseudouridine synthase A.